The following is a 381-amino-acid chain: Tafazzin (381 aa).

Over 1-25 (MSFRDVLERGDEFLEAYPRRSPLWR) the chain is Mitochondrial intermembrane. The stretch at 26–47 (FLSYSTSLLTFGVSKLLLFTCY) is an intramembrane region. Residues 48–381 (NVKLNGFEKL…PEGKPKGKDD (334 aa)) lie on the Mitochondrial intermembrane side of the membrane. The HXXXXD motif signature appears at 77–82 (HMSMVD). Residues 215–232 (LEATKPPIVVPIFATGFE) are required for membrane insertion.

The protein belongs to the taffazin family.

The protein localises to the mitochondrion outer membrane. Its subcellular location is the mitochondrion inner membrane. It carries out the reaction 1'-[1,2-diacyl-sn-glycero-3-phospho],3'-[1-acyl-sn-glycero-3-phospho]-glycerol + a 1,2-diacyl-sn-glycero-3-phosphocholine = a cardiolipin + a 1-acyl-sn-glycero-3-phosphocholine. It catalyses the reaction 1,2-di-(9Z,12Z-octadecadienoyl)-sn-glycero-3-phosphocholine + 1'-[1,2-di-(9Z,12Z-octadecadienoyl)-sn-glycero-3-phospho]-3'-[1-(9Z,12Z-octadecadienoyl)-sn-glycero-3-phospho]-glycerol = 1-(9Z,12Z)-octadecadienoyl-sn-glycero-3-phosphocholine + 1',3'-bis-[1,2-di-(9Z,12Z-octadecadienoyl)-sn-glycero-3-phospho]-glycerol. The enzyme catalyses 1'-[1,2-di-(9Z-octadecenoyl)-sn-glycero-3-phospho]-3'-[1-(9Z-octadecenoyl)-2-hexadecanoyl-sn-glycero-3-phospho]-glycerol + 1-hexadecanoyl-sn-glycero-3-phosphocholine = 1'-[1,2-di-(9Z-octadecenoyl)-sn-glycero-3-phospho]-3'-[1-(9Z-octadecenoyl)-sn-glycero-3-phospho]-glycerol + 1,2-dihexadecanoyl-sn-glycero-3-phosphocholine. The catalysed reaction is 1'-[1,2-di-(9Z-octadecenoyl)-sn-glycero-3-phospho]-3'-[1-(9Z-octadecenoyl)-2-(9Z-hexadecenoyl)-sn-glycero-3-phospho]-glycerol + 1-(9Z-hexadecenoyl)-sn-glycero-3-phosphocholine = 1,2-di-(9Z-hexadecenoyl)-sn-glycero-3-phosphocholine + 1'-[1,2-di-(9Z-octadecenoyl)-sn-glycero-3-phospho]-3'-[1-(9Z-octadecenoyl)-sn-glycero-3-phospho]-glycerol. It carries out the reaction 1',3'-bis[1,2-di-(9Z-octadecenoyl)-sn-glycero-3-phospho]-glycerol + 1-(9Z-octadecenoyl)-sn-glycero-3-phosphocholine = 1'-[1,2-di-(9Z-octadecenoyl)-sn-glycero-3-phospho]-3'-[1-(9Z-octadecenoyl)-sn-glycero-3-phospho]-glycerol + 1,2-di-(9Z-octadecenoyl)-sn-glycero-3-phosphocholine. It catalyses the reaction 1'-[1,2-di-(9Z-octadecenoyl)-sn-glycero-3-phospho]-3'-[1-(9Z-octadecenoyl)-2-(9Z,12Z-octadecadienoyl)-sn-glycero-3-phospho]-glycerol + 1-(9Z,12Z)-octadecadienoyl-sn-glycero-3-phosphocholine = 1,2-di-(9Z,12Z-octadecadienoyl)-sn-glycero-3-phosphocholine + 1'-[1,2-di-(9Z-octadecenoyl)-sn-glycero-3-phospho]-3'-[1-(9Z-octadecenoyl)-sn-glycero-3-phospho]-glycerol. The enzyme catalyses 1'-[1,2-di-(9Z-octadecenoyl)-sn-glycero-3-phospho]-3'-[1-(9Z-octadecenoyl)-2-(9Z-hexadecenoyl)-sn-glycero-3-phospho]-glycerol + 1-hexadecanoyl-sn-glycero-3-phosphocholine = 1-hexadecanoyl-2-(9Z-hexadecenoyl)-sn-glycero-3-phosphocholine + 1'-[1,2-di-(9Z-octadecenoyl)-sn-glycero-3-phospho]-3'-[1-(9Z-octadecenoyl)-sn-glycero-3-phospho]-glycerol. The catalysed reaction is 1'-[1,2-di-(9Z-octadecenoyl)-sn-glycero-3-phospho]-3'-[1-(9Z-octadecenoyl)-2-hexadecanoyl-sn-glycero-3-phospho]-glycerol + 1-(9Z-hexadecenoyl)-sn-glycero-3-phosphocholine = 1-(9Z-hexadecenoyl)-2-hexadecanoyl-sn-glycero-3-phosphocholine + 1'-[1,2-di-(9Z-octadecenoyl)-sn-glycero-3-phospho]-3'-[1-(9Z-octadecenoyl)-sn-glycero-3-phospho]-glycerol. It carries out the reaction 2 1'-[1,2-diacyl-sn-glycero-3-phospho],3'-[1-acyl-sn-glycero-3-phospho]-glycerol = 1',3'-bis-[1-acyl-sn-glycero-3-phospho]-glycerol + a cardiolipin. It catalyses the reaction 2 1'-[1,2-di-(9Z-octadecenoyl)-sn-glycero-3-phospho]-3'-[1-(9Z-octadecenoyl)-sn-glycero-3-phospho]-glycerol = 1',3'-bis-[1-(9Z-octadecenoyl)-sn-glycero-3-phospho]-glycerol + 1',3'-bis[1,2-di-(9Z-octadecenoyl)-sn-glycero-3-phospho]-glycerol. The enzyme catalyses 1,2-di-(9Z-hexadecenoyl)-sn-glycero-3-phosphocholine + 1-hexadecanoyl-sn-glycero-3-phosphocholine = 1-hexadecanoyl-2-(9Z-hexadecenoyl)-sn-glycero-3-phosphocholine + 1-(9Z-hexadecenoyl)-sn-glycero-3-phosphocholine. The catalysed reaction is 1'-[1,2-di-(9Z,12Z-octadecadienoyl)-sn-glycero-3-phospho]-3'-[1-(9Z,12Z-octadecadienoyl)-sn-glycero-3-phospho]-glycerol + 1,2-di-(9Z-octadecenoyl)-sn-glycero-3-phosphocholine = 1'-[1,2-di-(9Z,12Z-octadecadienoyl)-sn-glycero-3-phospho]-3'-[1-(9Z,12Z-octadecadienoyl)-2-(9Z-octadecenoyl)-sn-glycero-3-phospho]-glycerol + 1-(9Z-octadecenoyl)-sn-glycero-3-phosphocholine. The protein operates within phospholipid metabolism. Acyltransferase required to remodel newly synthesized phospholipid cardiolipin (1',3'-bis-[1,2-diacyl-sn-glycero-3-phospho]-glycerol or CL), a key component of the mitochondrial inner membrane, with tissue specific acyl chains necessary for adequate mitochondrial function. Its role in cellular physiology is to improve mitochondrial performance. CL is critical for the coassembly of lipids and proteins in mitochondrial membranes, for instance, remodeling of the acyl groups of CL in the mitochondrial inner membrane affects the assembly and stability of respiratory chain complex IV and its supercomplex forms. Catalyzes the transacylation between phospholipids and lysophospholipids, with the highest rate being between phosphatidylcholine (1,2-diacyl-sn-glycero-3-phosphocholine or PC) and CL. Catalyzes both 1-acyl-sn-glycero-3-phosphocholine (lysophosphatidylcholine or LPC) reacylation and PC-CL transacylation, that means, it exchanges acyl groups between CL and PC by a combination of forward and reverse transacylations. Also catalyzes transacylations between other phospholipids such as phosphatidylethanolamine (1,2-diacyl-sn-glycero-3-phosphoethanolamine or PE) and CL, between PC and PE, and between PC and phosphatidate (1,2-diacyl-sn-glycero-3-phosphate or PA), although at lower rate. Not regiospecific, it transfers acyl groups into any of the sn-1 and sn-2 positions of the monolysocardiolipin (MLCL), which is an important prerequisite for uniformity and symmetry in CL acyl distribution. Cannot transacylate dilysocardiolipin (DLCL), thus, the role of MLCL is limited to that of an acyl acceptor. CoA-independent, it can reshuffle molecular species within a single phospholipid class. Redistributes fatty acids between MLCL, CL, and other lipids, which prolongs the half-life of CL. Its action is completely reversible, which allows for cyclic changes, such as fission and fusion or bending and flattening of the membrane. Hence, by contributing to the flexibility of the lipid composition, it plays an important role in the dynamics of mitochondria membranes. Essential for the final stage of spermatogenesis, spermatid individualization. Required for the initiation of mitophagy. This chain is Tafazzin (TAZ1), found in Saccharomyces cerevisiae (strain ATCC 204508 / S288c) (Baker's yeast).